Consider the following 407-residue polypeptide: TOM1-like protein 1 (407 aa).

G2 carries the post-translational modification N-acetylglycine. A VHS domain is found at 55 to 183 (ATTENLEEPD…SLKARGIRFP (129 aa)). Positions 228 to 315 (FTAEQTKEAF…TLSKYEEMNK (88 aa)) constitute a GAT domain. The tract at residues 315–407 (KPSAPLTSHE…SSKNDDLIRF (93 aa)) is disordered. The residue at position 337 (S337) is a Phosphoserine. Basic and acidic residues predominate over residues 337–347 (SPIHGREESLV). The segment covering 353–364 (VRGGFHGGGGSG) has biased composition (gly residues). Over residues 388–407 (PDHDPKKEQSSSKNDDLIRF) the composition is skewed to basic and acidic residues.

This sequence belongs to the TOM1 family. As to expression, ubiquitously expressed.

It localises to the membrane. In terms of biological role, might contribute to the loading of the ESCRT machinery. In Arabidopsis thaliana (Mouse-ear cress), this protein is TOM1-like protein 1.